The chain runs to 547 residues: Chaperonin GroEL (547 aa).

ATP-binding positions include 30-33 (TLGP), Lys-51, 87-91 (DGTTT), Gly-415, 479-481 (NAA), and Asp-495. Residues 526-547 (KEEKSDLSVPPQGGMGGMGGMM) form a disordered region. Residues 538-547 (GGMGGMGGMM) show a composition bias toward gly residues.

It belongs to the chaperonin (HSP60) family. As to quaternary structure, forms a cylinder of 14 subunits composed of two heptameric rings stacked back-to-back. Interacts with the co-chaperonin GroES.

It localises to the cytoplasm. The enzyme catalyses ATP + H2O + a folded polypeptide = ADP + phosphate + an unfolded polypeptide.. In terms of biological role, together with its co-chaperonin GroES, plays an essential role in assisting protein folding. The GroEL-GroES system forms a nano-cage that allows encapsulation of the non-native substrate proteins and provides a physical environment optimized to promote and accelerate protein folding. The sequence is that of Chaperonin GroEL from Buchnera aphidicola subsp. Tetraneura caerulescens.